Here is a 240-residue protein sequence, read N- to C-terminus: Octanoyltransferase (240 aa).

The region spanning 31–216 (GQVGDTLLLL…HLCAVFDLEP (186 aa)) is the BPL/LPL catalytic domain. Substrate is bound by residues 76 to 83 (RGGGATYH), 145 to 147 (AIG), and 159 to 161 (GLA). Catalysis depends on C177, which acts as the Acyl-thioester intermediate.

The protein belongs to the LipB family.

The protein localises to the cytoplasm. It carries out the reaction octanoyl-[ACP] + L-lysyl-[protein] = N(6)-octanoyl-L-lysyl-[protein] + holo-[ACP] + H(+). Its pathway is protein modification; protein lipoylation via endogenous pathway; protein N(6)-(lipoyl)lysine from octanoyl-[acyl-carrier-protein]: step 1/2. In terms of biological role, catalyzes the transfer of endogenously produced octanoic acid from octanoyl-acyl-carrier-protein onto the lipoyl domains of lipoate-dependent enzymes. Lipoyl-ACP can also act as a substrate although octanoyl-ACP is likely to be the physiological substrate. The chain is Octanoyltransferase from Roseiflexus sp. (strain RS-1).